A 297-amino-acid polypeptide reads, in one-letter code: 32 kDa beta-galactoside-binding lectin lec-3 (297 aa).

2 Galectin domains span residues 11 to 142 (YRSK…VQWG) and 151 to 290 (ESGI…IQVV). 224–230 (WGNEERE) contacts a beta-D-galactoside.

In terms of biological role, binds galactose. This chain is 32 kDa beta-galactoside-binding lectin lec-3 (lec-3), found in Caenorhabditis elegans.